The following is a 307-amino-acid chain: Beta-lactamase (307 aa).

Residues 1 to 34 (MRNRGFGRRELLVAMAMLVSVTGCARHASGARPA) constitute a signal peptide (tat-type signal). S84 functions as the Acyl-ester intermediate in the catalytic mechanism. S142 is a binding site for substrate. The active-site Proton acceptor is the E182. Residue 251 to 253 (TGT) coordinates substrate.

It belongs to the class-A beta-lactamase family. Monomer. In terms of processing, exported by the Tat system. The position of the signal peptide cleavage has not been experimentally proven.

The protein localises to the periplasm. Its subcellular location is the secreted. The enzyme catalyses a beta-lactam + H2O = a substituted beta-amino acid. Is inhibited by clavulanate. Extended spectrum beta-lactamase (ESBL) that inactivates beta-lactam antibiotics by hydrolyzing the amide group of the beta-lactam ring. Displays high levels of penicillinase and cephalosporinase activity as well as measurable activity with carbapenems, including imipenem and meropenem. Plays a primary role in the intrinsic resistance of mycobacteria to beta-lactam antibiotics. This is Beta-lactamase (blaC) from Mycobacterium bovis (strain ATCC BAA-935 / AF2122/97).